A 350-amino-acid chain; its full sequence is UBX domain-containing protein 2B (350 aa).

Over residues 1-29 (MEERENSEEGDDGAGEEEEEDQGSGEDGG) the composition is skewed to acidic residues. The segment at 1–46 (MEERENSEEGDDGAGEEEEEDQGSGEDGGEVGAEREQEAELKDSLR) is disordered. Over residues 32-45 (GAEREQEAELKDSL) the composition is skewed to basic and acidic residues. One can recognise an SEP domain in the interval 160–225 (EIQILLKLWS…MEDHQDQEYI (66 aa)). Positions 271–348 (EHVPTTKIQI…DILNTVILQR (78 aa)) constitute a UBX domain.

Belongs to the NSFL1C family.

It localises to the nucleus. Its subcellular location is the cytoplasm. The protein resides in the cytosol. The protein localises to the endoplasmic reticulum. It is found in the golgi apparatus. It localises to the cytoskeleton. Its subcellular location is the microtubule organizing center. The protein resides in the centrosome. Adapter protein required for Golgi and endoplasmic reticulum biogenesis. Involved in Golgi and endoplasmic reticulum maintenance during interphase and in their reassembly at the end of mitosis. Regulates the centrosomal levels of kinase aurka-a/Aurora A during mitotic progression by promoting aurka-a removal from centrosomes in prophase. Also, regulates spindle orientation during mitosis. The polypeptide is UBX domain-containing protein 2B (ubxn2b) (Xenopus laevis (African clawed frog)).